The sequence spans 136 residues: Large ribosomal subunit protein uL16 (136 aa).

The protein belongs to the universal ribosomal protein uL16 family. In terms of assembly, part of the 50S ribosomal subunit.

In terms of biological role, binds 23S rRNA and is also seen to make contacts with the A and possibly P site tRNAs. This Shewanella sediminis (strain HAW-EB3) protein is Large ribosomal subunit protein uL16.